The sequence spans 487 residues: G-patch domain and KOW motifs-containing protein (487 aa).

3 disordered regions span residues His-65–Met-121, Val-181–Ala-232, and Lys-295–Pro-367. The stretch at Ala-88–Ser-116 forms a coiled coil. 2 stretches are compositionally biased toward basic and acidic residues: residues Glu-96 to Glu-106 and Ser-200 to Lys-209. Residues Val-154 to Ser-200 form the G-patch domain. Residues Gly-226–Asp-253 form the KOW 1 domain. 2 stretches are compositionally biased toward basic and acidic residues: residues Lys-295–Leu-333 and Arg-352–Pro-367. Residues Pro-428 to Gln-455 form the KOW 2 domain.

It belongs to the MOS2 family. In terms of assembly, component of the minor spliceosome, which splices U12-type introns.

Its subcellular location is the nucleus. Functionally, RNA-binding protein involved in pre-mRNA splicing. This Xenopus laevis (African clawed frog) protein is G-patch domain and KOW motifs-containing protein (gpkow).